A 333-amino-acid polypeptide reads, in one-letter code: Na(+)-translocating ferredoxin:NAD(+) oxidoreductase complex subunit B (333 aa).

A hydrophobic region spans residues 1–27 (MLNAILVPVGILGVFGLIFGIGLAIAA). Positions 33 to 92 (YEDPRVPLVRAALPGANCGGCGLPGCDALAANIVGGSAAIDACPVGGASCAAAVAEIMGM) constitute a 4Fe-4S domain. 28 residues coordinate [4Fe-4S] cluster: Cys50, Cys53, Cys58, Cys75, Cys138, Cys142, Cys148, Cys152, Cys172, Cys175, Cys178, Cys182, Cys217, Cys220, Cys223, Cys227, Cys246, Cys249, Cys252, Cys256, Cys279, Cys282, Cys285, Cys289, Cys310, Cys313, Cys316, and Cys320. 6 consecutive 4Fe-4S ferredoxin-type domains span residues 126–162 (REAM…IGED), 163–192 (GLPK…LVPE), 207–237 (KIAR…VENN), 239–266 (AKID…GDVE), 270–299 (STAY…GEIK), and 301–330 (PPYV…MRPN).

This sequence belongs to the 4Fe4S bacterial-type ferredoxin family. RnfB subfamily. In terms of assembly, the complex is composed of six subunits: RnfA, RnfB, RnfC, RnfD, RnfE and RnfG. [4Fe-4S] cluster serves as cofactor.

It is found in the cell membrane. It carries out the reaction 2 reduced [2Fe-2S]-[ferredoxin] + Na(+)(in) + NAD(+) + H(+) = 2 oxidized [2Fe-2S]-[ferredoxin] + Na(+)(out) + NADH. Functionally, part of a membrane-bound complex that couples electron transfer with translocation of ions across the membrane. Couples electron transfer from reduced ferredoxin to NAD(+) with electrogenic movement of Na(+) out of the cell. Involved in caffeate respiration. The chain is Na(+)-translocating ferredoxin:NAD(+) oxidoreductase complex subunit B from Acetobacterium woodii (strain ATCC 29683 / DSM 1030 / JCM 2381 / KCTC 1655 / WB1).